The sequence spans 372 residues: Steroid C26-monooxygenase (372 aa).

Residue Cys314 participates in heme binding.

The protein belongs to the cytochrome P450 family. Heme serves as cofactor.

It carries out the reaction cholest-4-en-3-one + 6 reduced [2Fe-2S]-[ferredoxin] + 3 O2 + 5 H(+) = (25R)-3-oxocholest-4-en-26-oate + 6 oxidized [2Fe-2S]-[ferredoxin] + 4 H2O. It participates in steroid metabolism; cholesterol degradation. In terms of biological role, involved in the utilization of cholesterol as the sole carbon and energy source by degrading the side chain during infection. Primarily catalyzes the sequential oxidation of the terminal methyl of cholest-4-en-3-one into (25R)-26-hydroxycholest-4-en-3-one (alcohol), (25R)-26-oxocholest-4-en-3-one (aldehyde), to finally yield the carboxylic acid (25R)-3-oxocholest-4-en-26-oate. Also able to sequentially oxidize cholesterol itself, not only cholest-4-en-3-one. The sequence is that of Steroid C26-monooxygenase (cyp142) from Mycobacterium tuberculosis (strain CDC 1551 / Oshkosh).